The following is a 66-amino-acid chain: MPKLKTKSGVKKRFKMTATGKLKAGVAGKRHRLISHNGKYIRQNRGTKVMSEADAKIIKSWLPYGL.

Belongs to the bacterial ribosomal protein bL35 family.

This Phenylobacterium zucineum (strain HLK1) protein is Large ribosomal subunit protein bL35.